The primary structure comprises 155 residues: Large ribosomal subunit protein uL13 (155 aa).

Belongs to the universal ribosomal protein uL13 family. Part of the 50S ribosomal subunit.

This protein is one of the early assembly proteins of the 50S ribosomal subunit, although it is not seen to bind rRNA by itself. It is important during the early stages of 50S assembly. This chain is Large ribosomal subunit protein uL13, found in Rickettsia conorii (strain ATCC VR-613 / Malish 7).